Reading from the N-terminus, the 26-residue chain is Guentherin (26 aa).

In terms of tissue distribution, expressed by the skin glands.

Its subcellular location is the secreted. In terms of biological role, antimicrobial peptide. Active against the Gram-positive bacteria S.aureus FDA209P (MIC=35.5 ug/ml) and B.subtilis ATCC 6633 (MIC&gt;64 ug/ml), but not active against the Gram-negative bacterium E.coli or the fungus C.albicans. This is Guentherin from Sylvirana guentheri (Gunther's frog).